The chain runs to 148 residues: Large ribosomal subunit protein bL9 (148 aa).

It belongs to the bacterial ribosomal protein bL9 family.

Functionally, binds to the 23S rRNA. The sequence is that of Large ribosomal subunit protein bL9 from Chromohalobacter salexigens (strain ATCC BAA-138 / DSM 3043 / CIP 106854 / NCIMB 13768 / 1H11).